Consider the following 277-residue polypeptide: WRKY transcription factor 68 (277 aa).

The interval 51 to 96 is disordered; the sequence is TPLMHFPTTPNSSSSEAVNGDDEEEEDGEEQQHKTKKRFKFTKMSR. Residues 58-67 show a composition bias toward polar residues; sequence TTPNSSSSEA. The segment covering 69-79 has biased composition (acidic residues); that stretch reads NGDDEEEEDGE. Residues 84–96 are compositionally biased toward basic residues; that stretch reads KTKKRFKFTKMSR. Positions 112 to 177 form a DNA-binding region, WRKY; sequence SEVLHLDDGY…YEGQHTHPRP (66 aa). Positions 183–206 are disordered; that stretch reads KEGSSPSNGSASRAHIGLPTLPPQ.

It belongs to the WRKY group II-c family.

It is found in the nucleus. Functionally, transcription factor. Interacts specifically with the W box (5'-(T)TGAC[CT]-3'), a frequently occurring elicitor-responsive cis-acting element. In Arabidopsis thaliana (Mouse-ear cress), this protein is WRKY transcription factor 68 (WRKY68).